We begin with the raw amino-acid sequence, 476 residues long: Flavin-dependent halogenase otaD (476 aa).

The FAD site is built by glycine 14 and glycine 17. Chloride contacts are provided by serine 304 and glycine 305. FAD is bound at residue valine 306.

The protein belongs to the flavin-dependent halogenase family.

The catalysed reaction is ochratoxin B + FADH2 + chloride + O2 = ochratoxin A + FAD + 2 H2O. It functions in the pathway mycotoxin biosynthesis. In terms of biological role, flavin-dependent halogenase; part of the gene cluster that mediates the biosynthesis of ochratoxin A (OTA), a mycotoxin composed of a chlorinated type I polyketide dihydroisocoumarin moiety linked to L-phenylalanine, and demonstrated to have nephrotoxic, immunotoxic, genotoxic, neurotoxic, and teratogenic properties. OtaD chlorinates ochratoxin B (OTB) at the C-5 position to form OTA. The pathway begins with the highly reducing polyketide synthase otaA that catalyzes the formation of the isocoumarin group during the initial stages of biosynthesis, starting from one acetate and 4 malonate units, to originate the characteristic pentaketide skeleton 7-methylmellein (7-MM) of the OTA molecule. The newly identified cyclase otaY might be involved in the polyketide cyclization reaction during the initial steps of the OTA biosynthesis. 7-MM is then oxidized into 7-carboxymellein (also called ochratoxin beta) by the cytochrome P450 monooxygenase otaC. The NRPS encoded by the otaB gene is involved in the linking of phenylalanine to the dihydroisocoumarin ring. The reaction catalyzed by NRPS results in the production of ochratoxin B (OTB), which is the non-chlorinated analog of OTA and which subsequently serves as the substrate of the halogenase otaD for chlorination activity to form the final molecular structure of OTA, containing a chlorine atom in the C-5 position of the molecule. This is Flavin-dependent halogenase otaD from Aspergillus niger (strain ATCC MYA-4892 / CBS 513.88 / FGSC A1513).